Consider the following 136-residue polypeptide: NADPH-dependent 7-cyano-7-deazaguanine reductase (136 aa).

Cys-50 acts as the Thioimide intermediate in catalysis. Asp-57 serves as the catalytic Proton donor. Substrate is bound by residues 72 to 74 and 91 to 92; these read YEL and HE.

Belongs to the GTP cyclohydrolase I family. QueF type 1 subfamily.

It is found in the cytoplasm. The enzyme catalyses 7-aminomethyl-7-carbaguanine + 2 NADP(+) = 7-cyano-7-deazaguanine + 2 NADPH + 3 H(+). The protein operates within tRNA modification; tRNA-queuosine biosynthesis. Functionally, catalyzes the NADPH-dependent reduction of 7-cyano-7-deazaguanine (preQ0) to 7-aminomethyl-7-deazaguanine (preQ1). The polypeptide is NADPH-dependent 7-cyano-7-deazaguanine reductase (Prochlorococcus marinus (strain MIT 9301)).